The chain runs to 75 residues: Small integral membrane protein 15 (75 aa).

Residues 21–41 traverse the membrane as a helical segment; sequence YGFLITVLLALTPLFLASAVL. Positions 49-75 form a coiled coil; that stretch reads IEAKERDQKKKQKRQENIAKAKRTKKD. Residues 52 to 67 are compositionally biased toward basic and acidic residues; it reads KERDQKKKQKRQENIA. The interval 52–75 is disordered; sequence KERDQKKKQKRQENIAKAKRTKKD.

Belongs to the SMIM15 family.

Its subcellular location is the membrane. The sequence is that of Small integral membrane protein 15 (smim15) from Xenopus laevis (African clawed frog).